Consider the following 680-residue polypeptide: Methionine--tRNA ligase (680 aa).

A 'HIGH' region motif is present at residues 14 to 24 (PYANGPIHLGH). Zn(2+)-binding residues include Cys145, Cys148, Cys158, and Cys161. The 'KMSKS' region signature appears at 330-334 (KMSKS). Lys333 contributes to the ATP binding site. The region spanning 579–680 (DFAKVDFRIA…DGAQPGMRVK (102 aa)) is the tRNA-binding domain.

Belongs to the class-I aminoacyl-tRNA synthetase family. MetG type 1 subfamily. In terms of assembly, homodimer. It depends on Zn(2+) as a cofactor.

Its subcellular location is the cytoplasm. It catalyses the reaction tRNA(Met) + L-methionine + ATP = L-methionyl-tRNA(Met) + AMP + diphosphate. In terms of biological role, is required not only for elongation of protein synthesis but also for the initiation of all mRNA translation through initiator tRNA(fMet) aminoacylation. In Hydrogenovibrio crunogenus (strain DSM 25203 / XCL-2) (Thiomicrospira crunogena), this protein is Methionine--tRNA ligase.